Consider the following 470-residue polypeptide: FK506-binding protein 4 (470 aa).

3 disordered regions span residues 40-101, 114-163, and 210-358; these read DEEP…KEKA, EEAM…GLEL, and PIDP…QTTG. 4 stretches are compositionally biased toward acidic residues: residues 68 to 91, 115 to 131, 150 to 163, and 218 to 254; these read DLED…DEEP, EAMD…EDGE, DSDE…GLEL, and EDED…ELDG. Basic and acidic residues-rich tracts occupy residues 268–291 and 319–332; these read EPPK…EKPA and EQKK…EAKK. The PPIase FKBP-type domain occupies 384-470; that stretch reads GNTVAMRYIG…IFDVKLLEIK (87 aa).

This sequence belongs to the FKBP-type PPIase family. FKBP3/4 subfamily. In terms of assembly, binds to histones H3 and H4.

The protein localises to the nucleus. It carries out the reaction [protein]-peptidylproline (omega=180) = [protein]-peptidylproline (omega=0). Inhibited by both FK506 and rapamycin. Functionally, PPIase that acts as a histone chaperone. Histone proline isomerase that increases the rate of cis-trans isomerization at prolines on the histone H3 N-terminal tail. Proline isomerization influences H3 methylation thereby regulating gene expression. The polypeptide is FK506-binding protein 4 (fpr4) (Aspergillus oryzae (strain ATCC 42149 / RIB 40) (Yellow koji mold)).